Consider the following 199-residue polypeptide: Protein GrpE (199 aa).

Basic and acidic residues predominate over residues 1–24 (MSKQNKKDWKKFKDEHKEEHKVEN). Residues 1 to 47 (MSKQNKKDWKKFKDEHKEEHKVENEILEEEIDEKSQHQEPALGHPSY) form a disordered region.

Belongs to the GrpE family. In terms of assembly, homodimer.

The protein resides in the cytoplasm. Participates actively in the response to hyperosmotic and heat shock by preventing the aggregation of stress-denatured proteins, in association with DnaK and GrpE. It is the nucleotide exchange factor for DnaK and may function as a thermosensor. Unfolded proteins bind initially to DnaJ; upon interaction with the DnaJ-bound protein, DnaK hydrolyzes its bound ATP, resulting in the formation of a stable complex. GrpE releases ADP from DnaK; ATP binding to DnaK triggers the release of the substrate protein, thus completing the reaction cycle. Several rounds of ATP-dependent interactions between DnaJ, DnaK and GrpE are required for fully efficient folding. This Legionella pneumophila (strain Paris) protein is Protein GrpE.